We begin with the raw amino-acid sequence, 268 residues long: Mediator of RNA polymerase II transcription subunit 8-A (268 aa).

Coiled coils occupy residues 1–26 (MQRE…KNSL) and 117–160 (VEEL…EERE). The interval 190–268 (GLSNRRPPGQ…KSASMHPYQR (79 aa)) is disordered. Residues 223 to 246 (VPMSLQSNQQQQHMAGVSMSQGNQ) show a composition bias toward polar residues.

The protein belongs to the Mediator complex subunit 8 family. As to quaternary structure, component of the Mediator complex. May be part of a multisubunit E3 ubiquitin-protein ligase complex.

The protein localises to the nucleus. The protein operates within protein modification; protein ubiquitination. Functionally, component of the Mediator complex, a coactivator involved in the regulated transcription of nearly all RNA polymerase II-dependent genes. Mediator functions as a bridge to convey information from gene-specific regulatory proteins to the basal RNA polymerase II transcription machinery. Mediator is recruited to promoters by direct interactions with regulatory proteins and serves as a scaffold for the assembly of a functional preinitiation complex with RNA polymerase II and the general transcription factors. May play a role as a target recruitment subunit in E3 ubiquitin-protein ligase complexes and thus in ubiquitination and subsequent proteasomal degradation of target proteins. This is Mediator of RNA polymerase II transcription subunit 8-A (med8-a) from Xenopus laevis (African clawed frog).